The sequence spans 171 residues: MDYFTLFGLPAHYQLDTQALSLRFQDLQRQYHPDKFASGTQAEQLAAVQHSATINQAWQTLRHPLTRAEYLLSLHGFDLASEQHTVRDTAFLMEQLELREELDEIEQAKDEARLESFIKRVKTMFDARHQLMVEQLDNETWDVAADTVRKLRFLDKLRSSAEQLEEKLLDF.

In terms of domain architecture, J spans 2–74 (DYFTLFGLPA…LTRAEYLLSL (73 aa)).

It belongs to the HscB family. In terms of assembly, interacts with HscA and stimulates its ATPase activity. Interacts with IscU.

Co-chaperone involved in the maturation of iron-sulfur cluster-containing proteins. Seems to help targeting proteins to be folded toward HscA. This Citrobacter koseri (strain ATCC BAA-895 / CDC 4225-83 / SGSC4696) protein is Co-chaperone protein HscB.